The following is a 231-amino-acid chain: Small ribosomal subunit protein uS3 (231 aa).

Positions 39-107 (IRELLHKELK…DVVLNIVEIR (69 aa)) constitute a KH type-2 domain.

The protein belongs to the universal ribosomal protein uS3 family. In terms of assembly, part of the 30S ribosomal subunit. Forms a tight complex with proteins S10 and S14.

Binds the lower part of the 30S subunit head. Binds mRNA in the 70S ribosome, positioning it for translation. This is Small ribosomal subunit protein uS3 from Nitrobacter winogradskyi (strain ATCC 25391 / DSM 10237 / CIP 104748 / NCIMB 11846 / Nb-255).